Reading from the N-terminus, the 540-residue chain is Fumonisin B1 esterase (540 aa).

Ser240 acts as the Acyl-ester intermediate in catalysis. Residues Glu356 and His448 each act as charge relay system in the active site. A disordered region spans residues 521–540; the sequence is QVGSGEGLGVSPSKACQPSK.

Belongs to the type-B carboxylesterase/lipase family.

The enzyme catalyses fumonisin B1 + 2 H2O = 2 tricarballylate + (2S,3S,5R,10R,12S,14S,15R,16R)-2-amino-12,16-dimethylicosane-3,5,10,14,15-pentol + 2 H(+). Involved in degradation of fumonisin B1. Catalyzes the hydrolysis of fumonisin B1 (FB1) to aminopentol (HFB1). The polypeptide is Fumonisin B1 esterase (fumD) (Sphingopyxis macrogoltabida (Sphingomonas macrogoltabidus)).